Reading from the N-terminus, the 158-residue chain is Small ribosomal subunit protein uS7 (158 aa).

The protein belongs to the universal ribosomal protein uS7 family. In terms of assembly, part of the 30S ribosomal subunit. Contacts proteins S9 and S11.

One of the primary rRNA binding proteins, it binds directly to 16S rRNA where it nucleates assembly of the head domain of the 30S subunit. Is located at the subunit interface close to the decoding center, probably blocks exit of the E-site tRNA. This chain is Small ribosomal subunit protein uS7, found in Porphyromonas gingivalis (strain ATCC 33277 / DSM 20709 / CIP 103683 / JCM 12257 / NCTC 11834 / 2561).